The chain runs to 201 residues: Histidine biosynthesis bifunctional protein HisIE (201 aa).

The phosphoribosyl-AMP cyclohydrolase stretch occupies residues Met1–Phe114. Residues Leu115–Arg201 are phosphoribosyl-ATP pyrophosphohydrolase.

The protein in the N-terminal section; belongs to the PRA-CH family. This sequence in the C-terminal section; belongs to the PRA-PH family.

It localises to the cytoplasm. The enzyme catalyses 1-(5-phospho-beta-D-ribosyl)-ATP + H2O = 1-(5-phospho-beta-D-ribosyl)-5'-AMP + diphosphate + H(+). It carries out the reaction 1-(5-phospho-beta-D-ribosyl)-5'-AMP + H2O = 1-(5-phospho-beta-D-ribosyl)-5-[(5-phospho-beta-D-ribosylamino)methylideneamino]imidazole-4-carboxamide. It participates in amino-acid biosynthesis; L-histidine biosynthesis; L-histidine from 5-phospho-alpha-D-ribose 1-diphosphate: step 2/9. The protein operates within amino-acid biosynthesis; L-histidine biosynthesis; L-histidine from 5-phospho-alpha-D-ribose 1-diphosphate: step 3/9. This Photorhabdus laumondii subsp. laumondii (strain DSM 15139 / CIP 105565 / TT01) (Photorhabdus luminescens subsp. laumondii) protein is Histidine biosynthesis bifunctional protein HisIE.